Here is a 386-residue protein sequence, read N- to C-terminus: Succinate--CoA ligase [ADP-forming] subunit beta (386 aa).

An ATP-grasp domain is found at Lys9 to Glu244. Residues Lys46, Gly53 to Gly55, Glu99, Ala102, and Glu107 each bind ATP. Asn199 and Asp213 together coordinate Mg(2+). Substrate is bound by residues Asn264 and Gly321–Met323.

This sequence belongs to the succinate/malate CoA ligase beta subunit family. In terms of assembly, heterotetramer of two alpha and two beta subunits. It depends on Mg(2+) as a cofactor.

The enzyme catalyses succinate + ATP + CoA = succinyl-CoA + ADP + phosphate. It carries out the reaction GTP + succinate + CoA = succinyl-CoA + GDP + phosphate. It participates in carbohydrate metabolism; tricarboxylic acid cycle; succinate from succinyl-CoA (ligase route): step 1/1. Succinyl-CoA synthetase functions in the citric acid cycle (TCA), coupling the hydrolysis of succinyl-CoA to the synthesis of either ATP or GTP and thus represents the only step of substrate-level phosphorylation in the TCA. The beta subunit provides nucleotide specificity of the enzyme and binds the substrate succinate, while the binding sites for coenzyme A and phosphate are found in the alpha subunit. The polypeptide is Succinate--CoA ligase [ADP-forming] subunit beta (Aromatoleum aromaticum (strain DSM 19018 / LMG 30748 / EbN1) (Azoarcus sp. (strain EbN1))).